The primary structure comprises 1230 residues: MEISKPKGSTWTDDQWKAIVSSGRDILVAAAAGSGKTAVLVERIIRKITDQERPVDVDRLLVVTFTNASAAEMKHRIGEALEKELAENPGSLHLRRQLALLNKASISTLHSFCLQVIRKYYYLIDVDPAFRIADQTEGELLGDEVLDELFEEEYKKGNPAFFELVDRYTTDRHDLDLQHLVKRVYEFSRSHPDPEGWLHSLAELYDAASDTKVEALPFYSYIKEDIALVLEGMRQKLTRALDLTKQPGGPAPRAENFLDDLAQIDRLIQQQDDFSALHELVPTVSFQRLKPCKGDEYDPRLVDEAADLRNSAKKQLEKLKSDYFSRTPEQHLESLREMKPVIQTLVQLVLEYGRRFAEAKKEKAIVDFSDLEHDCLAILSVKNPAGEAVPSEAAKFYRHQFHEVLVDEYQDTNLVQEAILKLVAKEEHEGNLFMVGDVKQSIYRFRLAEPLLFLSKYKRFTDDGSGSGQKIDLNKNFRSRSDILDSTNFLFKQLMGEKVGEVEYDEQAELKLGASYPPNEATKTELLLIETPSGAPGEEAEELEAVQLEARAMAGQIRRLITEKFQVYDAKAKASRNIQYRDIVVLLRSMPWAPQIMDEFKQQGIPVYANLSTGYFEATEVSVTLSLLKIIDNAYQDIPLASVLRSPVVGLDENELSLIRIKDKKAPFYEAMKAYLAAADGDERLSEKLRRFDGLLKKWRAYAKNHSVAELIWEIYRDTKYLDYVGGMPGGKQRQANLRALYDRARSYEATSFRGLFRFLRFIERMQERGDDLGTARALSEQEDVVRLMTIHSSKGLEFPVVFTAGLGRNFNMMDLNKSYLLDKELGFGTKFIHPKWRISYPTLPLIAMKKKLRRELLSEELRVLYVALTRAKEKLYLVGTAKDKEKLLADWRTQAAGSEWLLPDYERFQAKSYLDFIGPALMRHRDMDESGAPPVIDEIREHPARFQVSWLSAADLQAEAVDQAGEERHDRLVQIQMGHAIEGAFEYEQQVRERLAWSYPYKDAAKVRTKQSVSEMKRQKEYEDEYGDRSLIRPSQEALLFKRPSFMMAKGLTAAERGTAMHTVMQHIPLTRTPEKNELSRLLDRLVEKELLTEDQRAAIEEDDILAFFDTEIGQKLFGARRVEREVPFNMTLSAKEVYPDLESADEPVLIQGIIDCLFETEDGFYLLDYKTDRIHGKYRNGFEGAEPILRKRYETQIQLYARAVETMIKMPLKGRALYFFDGGHVLLF.

The 472-residue stretch at 9-480 (STWTDDQWKA…IDLNKNFRSR (472 aa)) folds into the UvrD-like helicase ATP-binding domain. 30–37 (AAAGSGKT) contributes to the ATP binding site. The region spanning 507–796 (QAELKLGASY…RLMTIHSSKG (290 aa)) is the UvrD-like helicase C-terminal domain.

It belongs to the helicase family. AddA subfamily. In terms of assembly, heterodimer of AddA and AddB/RexB. Mg(2+) serves as cofactor.

The catalysed reaction is Couples ATP hydrolysis with the unwinding of duplex DNA by translocating in the 3'-5' direction.. It carries out the reaction ATP + H2O = ADP + phosphate + H(+). The heterodimer acts as both an ATP-dependent DNA helicase and an ATP-dependent, dual-direction single-stranded exonuclease. Recognizes the chi site generating a DNA molecule suitable for the initiation of homologous recombination. The AddA nuclease domain is required for chi fragment generation; this subunit has the helicase and 3' -&gt; 5' nuclease activities. The polypeptide is ATP-dependent helicase/nuclease subunit A (Bacillus licheniformis (strain ATCC 14580 / DSM 13 / JCM 2505 / CCUG 7422 / NBRC 12200 / NCIMB 9375 / NCTC 10341 / NRRL NRS-1264 / Gibson 46)).